A 316-amino-acid chain; its full sequence is Type II restriction enzyme BsuBI (316 aa).

The protein belongs to the BsuBI/PstI type II restriction endonuclease family. As to quaternary structure, homodimer. The cofactor is Mg(2+).

It catalyses the reaction Endonucleolytic cleavage of DNA to give specific double-stranded fragments with terminal 5'-phosphates.. Functionally, a P subtype restriction enzyme that recognizes the double-stranded sequence 5'-CTGCAG-3' and cleaves after A-5. The polypeptide is Type II restriction enzyme BsuBI (hsdBR) (Bacillus subtilis).